An 84-amino-acid chain; its full sequence is Cytochrome b559 subunit alpha (84 aa).

The helical transmembrane segment at 22–36 (VIHSITIPSLFVAGW) threads the bilayer. Heme is bound at residue H24.

Belongs to the PsbE/PsbF family. As to quaternary structure, heterodimer of an alpha subunit and a beta subunit. PSII is composed of 1 copy each of membrane proteins PsbA, PsbB, PsbC, PsbD, PsbE, PsbF, PsbH, PsbI, PsbJ, PsbK, PsbL, PsbM, PsbT, PsbX, PsbY, PsbZ, Psb30/Ycf12, at least 3 peripheral proteins of the oxygen-evolving complex and a large number of cofactors. It forms dimeric complexes. Requires heme b as cofactor.

It is found in the plastid. Its subcellular location is the chloroplast thylakoid membrane. In terms of biological role, this b-type cytochrome is tightly associated with the reaction center of photosystem II (PSII). PSII is a light-driven water:plastoquinone oxidoreductase that uses light energy to abstract electrons from H(2)O, generating O(2) and a proton gradient subsequently used for ATP formation. It consists of a core antenna complex that captures photons, and an electron transfer chain that converts photonic excitation into a charge separation. This is Cytochrome b559 subunit alpha from Gracilaria tenuistipitata var. liui (Red alga).